We begin with the raw amino-acid sequence, 325 residues long: Cytochrome c biogenesis protein CcsA (325 aa).

8 helical membrane-spanning segments follow: residues 12 to 32, 45 to 65, 72 to 92, 100 to 120, 145 to 165, 231 to 251, 264 to 281, and 293 to 313; these read HISFSVVSILISIHLITLLFV, GMIITFFCITGLLVTRWVFSG, LYESLIFLSWTFSIFYMVPYF, LNTIITPSVIFTQGFATSGLL, MILGYATLLCGSLLSVAILVI, TISLGFIFLTIGIISGAVWAN, ETWAFITWTIFAIYLHTR, and IVASIGFLIIWVCYLGINLLG.

The protein belongs to the CcmF/CycK/Ccl1/NrfE/CcsA family. As to quaternary structure, may interact with Ccs1.

It is found in the plastid. Its subcellular location is the chloroplast thylakoid membrane. Functionally, required during biogenesis of c-type cytochromes (cytochrome c6 and cytochrome f) at the step of heme attachment. This is Cytochrome c biogenesis protein CcsA from Glycine max (Soybean).